The chain runs to 303 residues: Elongation factor Ts (303 aa).

The tract at residues 80–83 is involved in Mg(2+) ion dislocation from EF-Tu; it reads TDFV.

Belongs to the EF-Ts family.

Its subcellular location is the cytoplasm. Its function is as follows. Associates with the EF-Tu.GDP complex and induces the exchange of GDP to GTP. It remains bound to the aminoacyl-tRNA.EF-Tu.GTP complex up to the GTP hydrolysis stage on the ribosome. The protein is Elongation factor Ts of Clostridium botulinum (strain Alaska E43 / Type E3).